Reading from the N-terminus, the 1048-residue chain is Self-sufficient cytochrome P450 monooxygenase CYP505E4 (1048 aa).

Position 405 (C405) interacts with heme. In terms of domain architecture, Flavodoxin-like spans 499 to 640 (VSFFYGSNSG…DLEVWEETNL (142 aa)). Residues 505-509 (SNSGT) and 584-616 (VFGCGHQDWTKTFYRIPILIDNLMYKAGATRLA) contribute to the FMN site. An FAD-binding FR-type domain is found at 678–906 (RDLIEAKVTA…RPAKDAFHLP (229 aa)).

This sequence in the N-terminal section; belongs to the cytochrome P450 family. It depends on FAD as a cofactor. Requires FMN as cofactor. The cofactor is heme.

The enzyme catalyses 2 oxidized [cytochrome P450] + NADPH = 2 reduced [cytochrome P450] + NADP(+) + H(+). It carries out the reaction an organic molecule + reduced [NADPH--hemoprotein reductase] + O2 = an alcohol + oxidized [NADPH--hemoprotein reductase] + H2O + H(+). It catalyses the reaction dodecanoate + reduced [NADPH--hemoprotein reductase] + O2 = 5-hydroxydodecanoate + oxidized [NADPH--hemoprotein reductase] + H2O + H(+). The catalysed reaction is tetradecanoate + reduced [NADPH--hemoprotein reductase] + O2 = 7-hydroxytetradecanoate + oxidized [NADPH--hemoprotein reductase] + H2O + H(+). The enzyme catalyses dodecan-1-ol + reduced [NADPH--hemoprotein reductase] + O2 = 1,5-dodecanediol + oxidized [NADPH--hemoprotein reductase] + H2O + H(+). It carries out the reaction dodecan-1-ol + reduced [NADPH--hemoprotein reductase] + O2 = 1,4-dodecanediol + oxidized [NADPH--hemoprotein reductase] + H2O + H(+). It catalyses the reaction dodecan-1-ol + reduced [NADPH--hemoprotein reductase] + O2 = 1,6-dodecanediol + oxidized [NADPH--hemoprotein reductase] + H2O + H(+). Functionally, self-sufficient cytochrome P450 monooxygenase that catalyzes the regioselective in-chain hydroxylation of alkanes, fatty alcohols, and fatty acids at the omega-7 position. Performs hydroxylation of C10-C16 n-alkanes and C12 and C14 fatty alcohols; and thereby enables the one step biocatalytic synthesis of rare alcohols such as 5-dodecanol and 7-tetradecanol. Converts 1-dodecanol into 1,5-dodecanediol as major product with very little sub-terminally hydroxylated products with the 1,4-dodecanediol and 1,6-dodecanediol more abundant. Converts dodecanoic acid to 5-hydroxydodecanoic acid which can be further converted into delta-dodecalactone by lactonization of the 5-hydroxy acid at low pH. Also gives sub-terminal hydroxylation of dodecanoic acid with 9-hydroxydodecanoic acid being the second most abundant product. The polypeptide is Self-sufficient cytochrome P450 monooxygenase CYP505E4 (Penicillium expansum (Blue mold rot fungus)).